Reading from the N-terminus, the 168-residue chain is Photosystem I assembly protein Ycf3 (168 aa).

TPR repeat units lie at residues 35 to 68 (AFTYYRDGMSAQSEGNYAEALQNYYEAMRLEIDP), 72 to 105 (SYILYNIGLIHTSNGEHTKALEYYFRALERNPFL), and 120 to 153 (GEQAIQQGDSEIAEAWFDQAAEYWKQAIALTPGN).

This sequence belongs to the Ycf3 family.

Its subcellular location is the plastid. The protein resides in the chloroplast thylakoid membrane. Its function is as follows. Essential for the assembly of the photosystem I (PSI) complex. May act as a chaperone-like factor to guide the assembly of the PSI subunits. This is Photosystem I assembly protein Ycf3 from Solanum lycopersicum (Tomato).